Here is a 124-residue protein sequence, read N- to C-terminus: Small ribosomal subunit protein uS12 (124 aa).

The residue at position 89 (Asp89) is a 3-methylthioaspartic acid. Residues Gln105 to Ser124 form a disordered region. A compositionally biased stretch (basic residues) spans Lys108–Gly118.

This sequence belongs to the universal ribosomal protein uS12 family. Part of the 30S ribosomal subunit. Contacts proteins S8 and S17. May interact with IF1 in the 30S initiation complex.

With S4 and S5 plays an important role in translational accuracy. In terms of biological role, interacts with and stabilizes bases of the 16S rRNA that are involved in tRNA selection in the A site and with the mRNA backbone. Located at the interface of the 30S and 50S subunits, it traverses the body of the 30S subunit contacting proteins on the other side and probably holding the rRNA structure together. The combined cluster of proteins S8, S12 and S17 appears to hold together the shoulder and platform of the 30S subunit. The sequence is that of Small ribosomal subunit protein uS12 (rpsL) from Mycolicibacterium smegmatis (strain ATCC 700084 / mc(2)155) (Mycobacterium smegmatis).